Here is a 232-residue protein sequence, read N- to C-terminus: Rho-related GTP-binding protein Rho6 (232 aa).

GTP contacts are provided by residues 23–28, 38–45, 67–71, 125–128, and 169–170; these read QCGKTA, YPETYVPT, DTSGS, CKTD, and AF. The short motif at 42-50 is the Effector region element; it reads YVPTVFENY. A Cysteine methyl ester modification is found at cysteine 229. Cysteine 229 carries the S-geranylgeranyl cysteine lipid modification. Positions 230–232 are cleaved as a propeptide — removed in mature form; it reads SIM.

It belongs to the small GTPase superfamily. Rho family. As to quaternary structure, binds GRB7 and PLXNB1. Interacts with UBXD5. Interacts with PLXNA2. Mostly expressed in brain and liver.

The protein localises to the cell membrane. It is found in the cytoplasm. The protein resides in the cytoskeleton. Its function is as follows. Lacks intrinsic GTPase activity. Has a low affinity for GDP, and constitutively binds GTP. Controls rearrangements of the actin cytoskeleton. Induces the Rac-dependent neuritic process formation in part by disruption of the cortical actin filaments. Causes the formation of many neuritic processes from the cell body with disruption of the cortical actin filaments. The protein is Rho-related GTP-binding protein Rho6 (RND1) of Homo sapiens (Human).